The chain runs to 450 residues: ATP-dependent protease ATPase subunit HslU (450 aa).

ATP is bound by residues Val29, 71–76, Asp261, Glu328, and Arg400; that span reads GVGKTE.

It belongs to the ClpX chaperone family. HslU subfamily. In terms of assembly, a double ring-shaped homohexamer of HslV is capped on each side by a ring-shaped HslU homohexamer. The assembly of the HslU/HslV complex is dependent on binding of ATP.

The protein localises to the cytoplasm. Functionally, ATPase subunit of a proteasome-like degradation complex; this subunit has chaperone activity. The binding of ATP and its subsequent hydrolysis by HslU are essential for unfolding of protein substrates subsequently hydrolyzed by HslV. HslU recognizes the N-terminal part of its protein substrates and unfolds these before they are guided to HslV for hydrolysis. The sequence is that of ATP-dependent protease ATPase subunit HslU from Rickettsia canadensis (strain McKiel).